Consider the following 177-residue polypeptide: 3-hydroxydecanoyl-[acyl-carrier-protein] dehydratase (177 aa).

His-76 is a catalytic residue.

It belongs to the thioester dehydratase family. FabA subfamily. In terms of assembly, homodimer.

Its subcellular location is the cytoplasm. The catalysed reaction is a (3R)-hydroxyacyl-[ACP] = a (2E)-enoyl-[ACP] + H2O. The enzyme catalyses (3R)-hydroxydecanoyl-[ACP] = (2E)-decenoyl-[ACP] + H2O. It catalyses the reaction (2E)-decenoyl-[ACP] = (3Z)-decenoyl-[ACP]. The protein operates within lipid metabolism; fatty acid biosynthesis. Functionally, necessary for the introduction of cis unsaturation into fatty acids. Catalyzes the dehydration of (3R)-3-hydroxydecanoyl-ACP to E-(2)-decenoyl-ACP and then its isomerization to Z-(3)-decenoyl-ACP. Can catalyze the dehydratase reaction for beta-hydroxyacyl-ACPs with saturated chain lengths up to 16:0, being most active on intermediate chain length. The protein is 3-hydroxydecanoyl-[acyl-carrier-protein] dehydratase of Mannheimia succiniciproducens (strain KCTC 0769BP / MBEL55E).